The following is a 545-amino-acid chain: MSSKIERIFSGPALKINTYLDKLPKIYNVFFIASISTIAGMMFGFDISSMSAFIGAEHYMRYFNSPGSDIQGFITSSMALGSFFGSIASSFVSEPFGRRLSLLTCAFFWMVGAAIQSSVQNRAQLIIGRIISGIGVGFGSAVAPVYGAELAPRKIRGLIGGMFQFFVTLGIMIMFYLSFGLGHINGVASFRIAWGLQIVPGLCLFLGCFFIPESPRWLAKQGQWEAAEEIVAKIQAHGDRENPDVLIEISEIKDQLLLEESSKQIGYATLFTKKYIQRTFTAIFAQIWQQLTGMNVMMYYIVYIFQMAGYSGNSNLVASSIQYVINTCVTVPALYFIDKVGRRPLLIGGATMMMAFQFGLAGILGQYSIPWPDSGNDSVNIRIPEDNKSASKGAIACCYLFVASFAFTWGVGIWVYCAEIWGDNRVAQRGNAISTSANWILNFAIAMYTPTGFKNISWKTYIIYGVFCFAMATHVYFGFPETKGKRLEEIGQMWEERVPAWRSRSWQPTVPIASDAELARKMEVEHEEDKLMNEDSNSESRENQA.

Transmembrane regions (helical) follow at residues 29 to 49, 72 to 92, 100 to 120, 125 to 145, 157 to 177, 192 to 212, 291 to 311, 317 to 337, and 345 to 365; these read VFFI…DISS, GFIT…SSFV, LSLL…SSVQ, LIIG…VAPV, GLIG…MFYL, IAWG…FFIP, LTGM…AGYS, VASS…LYFI, and LLIG…GILG. N-linked (GlcNAc...) asparagine glycosylation is found at asparagine 376 and asparagine 387. The next 2 helical transmembrane spans lie at 395–415 and 433–453; these read IACC…GIWV and ISTS…PTGF. The N-linked (GlcNAc...) asparagine glycan is linked to asparagine 455. The chain crosses the membrane as a helical span at residues 460-480; it reads TYIIYGVFCFAMATHVYFGFP. Residues 524 to 545 form a disordered region; it reads VEHEEDKLMNEDSNSESRENQA.

The protein belongs to the major facilitator superfamily. Sugar transporter (TC 2.A.1.1) family. Interacts with the human complement factors FH and C4BP. Also binds human immunodeficiency virus (HIV) protein gp160.

The protein localises to the cell membrane. High-affinity glucose transporter. Acts as a multifunctional complement-evasion molecule that causes down-regulation of complement activation by acquisition of human complement factors FH and C4BP. Also functions as a human immunodeficiency virus (HIV) receptor via binding the viral gp160 protein. Modulates hyphae formation. This chain is High-affinity glucose transporter 1, found in Candida albicans (strain SC5314 / ATCC MYA-2876) (Yeast).